The sequence spans 277 residues: 3-methyl-2-oxobutanoate hydroxymethyltransferase (277 aa).

Asp-49 and Asp-88 together coordinate Mg(2+). 3-methyl-2-oxobutanoate contacts are provided by residues 49-50 (DS), Asp-88, and Lys-118. Residue Glu-120 participates in Mg(2+) binding. Catalysis depends on Glu-186, which acts as the Proton acceptor.

It belongs to the PanB family. In terms of assembly, homodecamer; pentamer of dimers. Mg(2+) is required as a cofactor.

The protein resides in the cytoplasm. The enzyme catalyses 3-methyl-2-oxobutanoate + (6R)-5,10-methylene-5,6,7,8-tetrahydrofolate + H2O = 2-dehydropantoate + (6S)-5,6,7,8-tetrahydrofolate. It participates in cofactor biosynthesis; (R)-pantothenate biosynthesis; (R)-pantoate from 3-methyl-2-oxobutanoate: step 1/2. Catalyzes the reversible reaction in which hydroxymethyl group from 5,10-methylenetetrahydrofolate is transferred onto alpha-ketoisovalerate to form ketopantoate. In Cereibacter sphaeroides (strain ATCC 17025 / ATH 2.4.3) (Rhodobacter sphaeroides), this protein is 3-methyl-2-oxobutanoate hydroxymethyltransferase.